Reading from the N-terminus, the 265-residue chain is Deoxyribose-phosphate aldolase 2 (265 aa).

The Proton donor/acceptor role is filled by Asp108. Lys173 functions as the Schiff-base intermediate with acetaldehyde in the catalytic mechanism. The active-site Proton donor/acceptor is Lys207.

This sequence belongs to the DeoC/FbaB aldolase family. DeoC type 2 subfamily.

The protein localises to the cytoplasm. The enzyme catalyses 2-deoxy-D-ribose 5-phosphate = D-glyceraldehyde 3-phosphate + acetaldehyde. It functions in the pathway carbohydrate degradation; 2-deoxy-D-ribose 1-phosphate degradation; D-glyceraldehyde 3-phosphate and acetaldehyde from 2-deoxy-alpha-D-ribose 1-phosphate: step 2/2. Catalyzes a reversible aldol reaction between acetaldehyde and D-glyceraldehyde 3-phosphate to generate 2-deoxy-D-ribose 5-phosphate. This Yersinia pestis protein is Deoxyribose-phosphate aldolase 2 (deoC2).